The primary structure comprises 460 residues: V-type ATP synthase beta chain (460 aa).

It belongs to the ATPase alpha/beta chains family.

Functionally, produces ATP from ADP in the presence of a proton gradient across the membrane. The V-type beta chain is a regulatory subunit. The protein is V-type ATP synthase beta chain of Clostridium novyi (strain NT).